The sequence spans 180 residues: Ribulose bisphosphate carboxylase small subunit, chloroplastic 2 (180 aa).

The transit peptide at 1–56 directs the protein to the chloroplast; it reads MASSVMSSAAVATSTNAAQASMVAPFTGLKSAASFPVSRKQNLDITSIASNGGRVQ.

The protein belongs to the RuBisCO small chain family. As to quaternary structure, heterohexadecamer of 8 large and 8 small subunits.

The protein resides in the plastid. It is found in the chloroplast. Functionally, ruBisCO catalyzes two reactions: the carboxylation of D-ribulose 1,5-bisphosphate, the primary event in carbon dioxide fixation, as well as the oxidative fragmentation of the pentose substrate. Both reactions occur simultaneously and in competition at the same active site. Although the small subunit is not catalytic it is essential for maximal activity. The polypeptide is Ribulose bisphosphate carboxylase small subunit, chloroplastic 2 (Petunia hybrida (Petunia)).